The sequence spans 430 residues: Adenylosuccinate synthetase (430 aa).

GTP contacts are provided by residues 12 to 18 (GDEGKGK) and 40 to 42 (GHT). Asp13 (proton acceptor) is an active-site residue. Mg(2+) contacts are provided by Asp13 and Gly40. IMP contacts are provided by residues 13-16 (DEGK), 38-41 (NAGH), Thr130, Arg144, Gln224, Thr239, and Arg303. The active-site Proton donor is His41. 299 to 305 (TVTGRKR) contributes to the substrate binding site. Residues Arg305, 331 to 333 (KLD), and 413 to 415 (STS) contribute to the GTP site.

Belongs to the adenylosuccinate synthetase family. Homodimer. The cofactor is Mg(2+).

It localises to the cytoplasm. The enzyme catalyses IMP + L-aspartate + GTP = N(6)-(1,2-dicarboxyethyl)-AMP + GDP + phosphate + 2 H(+). Its pathway is purine metabolism; AMP biosynthesis via de novo pathway; AMP from IMP: step 1/2. Its function is as follows. Plays an important role in the de novo pathway of purine nucleotide biosynthesis. Catalyzes the first committed step in the biosynthesis of AMP from IMP. The chain is Adenylosuccinate synthetase from Cereibacter sphaeroides (strain ATCC 17029 / ATH 2.4.9) (Rhodobacter sphaeroides).